Reading from the N-terminus, the 133-residue chain is uncharacterized protein (133 aa).

A helical transmembrane segment spans residues 11-31; that stretch reads YFLISVFLIFIVSGITYFYST.

The protein resides in the membrane. This is an uncharacterized protein from Borreliella burgdorferi (strain ATCC 35210 / DSM 4680 / CIP 102532 / B31) (Borrelia burgdorferi).